We begin with the raw amino-acid sequence, 587 residues long: Arginine--tRNA ligase (587 aa).

The short motif at 127–137 (ANPTGPLHVGH) is the 'HIGH' region element.

The protein belongs to the class-I aminoacyl-tRNA synthetase family. In terms of assembly, monomer.

The protein localises to the cytoplasm. It catalyses the reaction tRNA(Arg) + L-arginine + ATP = L-arginyl-tRNA(Arg) + AMP + diphosphate. The chain is Arginine--tRNA ligase from Dechloromonas aromatica (strain RCB).